Reading from the N-terminus, the 274-residue chain is Large ribosomal subunit protein bL28m (274 aa).

A disordered region spans residues 249 to 274 (SETEEFGLGQEEDLFMKEEPKPTKMA). The segment covering 262 to 274 (LFMKEEPKPTKMA) has biased composition (basic and acidic residues).

This sequence belongs to the bacterial ribosomal protein bL28 family. As to quaternary structure, component of the mitochondrial large ribosomal subunit (mt-LSU). Mature N.crassa 74S mitochondrial ribosomes consist of a small (37S) and a large (54S) subunit. The 37S small subunit contains a 16S ribosomal RNA (16S mt-rRNA) and 32 different proteins. The 54S large subunit contains a 23S rRNA (23S mt-rRNA) and 42 different proteins.

The protein resides in the mitochondrion. Functionally, component of the mitochondrial ribosome (mitoribosome), a dedicated translation machinery responsible for the synthesis of mitochondrial genome-encoded proteins, including at least some of the essential transmembrane subunits of the mitochondrial respiratory chain. The mitoribosomes are attached to the mitochondrial inner membrane and translation products are cotranslationally integrated into the membrane. This chain is Large ribosomal subunit protein bL28m (mrpl24), found in Neurospora crassa (strain ATCC 24698 / 74-OR23-1A / CBS 708.71 / DSM 1257 / FGSC 987).